A 412-amino-acid polypeptide reads, in one-letter code: Divalent metal cation transporter MntH (412 aa).

Residues 1-19 (MTNYRVESSSGRAARKTRL) are Cytoplasmic-facing. A helical membrane pass occupies residues 20-39 (ALMGPAFIAAIGYIDPGNFA). Over 40-51 (TNIQAGASFGYQ) the chain is Periplasmic. Residues 52 to 71 (LLWVVVWANLMAMLIQILSA) traverse the membrane as a helical segment. The Cytoplasmic segment spans residues 72 to 95 (KLGIATGKNLAEQIRDHYPRPVVW). The helical transmembrane segment at 96-118 (FYWVQAEIIAMATDLAEFIGAAI) threads the bilayer. Topologically, residues 119-125 (GFKLILG) are periplasmic. A helical transmembrane segment spans residues 126–145 (VSLLQGAVLTGIATFLILML). Over 146 to 155 (QRRGQKPLEK) the chain is Cytoplasmic. Residues 156 to 175 (VIGGLLLFVAAAYIVELIFS) traverse the membrane as a helical segment. Over 176-196 (QPNLAQLGKGMVIPSLPTSEA) the chain is Periplasmic. A helical transmembrane segment spans residues 197 to 220 (VFLAAGVLGATIMPHVIYLHSSLT). Over 221–238 (QHLHGGSRQQRYSATKWD) the chain is Cytoplasmic. A helical transmembrane segment spans residues 239–258 (VAIAMTIAGFVNLAMMATAA). Topologically, residues 259 to 276 (AAFHFSGHTGVADLDEAY) are periplasmic. The helical transmembrane segment at 277-297 (LTLQPLLSHAAATVFGLSLVA) threads the bilayer. Residues 298 to 327 (AGLSSTVVGTLAGQVVMQGFIRFHIPLWVR) are Cytoplasmic-facing. The helical transmembrane segment at 328 to 344 (RTVTMLPSFIVILMGLD) threads the bilayer. Over 345–350 (PTRILV) the chain is Periplasmic. The helical transmembrane segment at 351-370 (MSQVLLSFGIALALVPLLIF) threads the bilayer. Topologically, residues 371–387 (TSDSKLMGDLVNSKRVK) are cytoplasmic. Residues 388-406 (QTGWVIVVLVVALNIWLLV) traverse the membrane as a helical segment. Residues 407-412 (GTALGL) are Periplasmic-facing.

This sequence belongs to the NRAMP family.

It localises to the cell inner membrane. In terms of biological role, h(+)-stimulated, divalent metal cation uptake system. In Escherichia coli O9:H4 (strain HS), this protein is Divalent metal cation transporter MntH.